A 386-amino-acid chain; its full sequence is Diaminopimelate decarboxylase (386 aa).

Position 49 is an N6-(pyridoxal phosphate)lysine (K49). Pyridoxal 5'-phosphate-binding positions include G228 and 266–269; that span reads ELGR. The substrate site is built by R269, R305, Y309, E335, and Y363. Pyridoxal 5'-phosphate is bound at residue Y363.

Belongs to the Orn/Lys/Arg decarboxylase class-II family. LysA subfamily. Homodimer. Requires pyridoxal 5'-phosphate as cofactor.

The enzyme catalyses meso-2,6-diaminopimelate + H(+) = L-lysine + CO2. It participates in amino-acid biosynthesis; L-lysine biosynthesis via DAP pathway; L-lysine from DL-2,6-diaminopimelate: step 1/1. Specifically catalyzes the decarboxylation of meso-diaminopimelate (meso-DAP) to L-lysine. The protein is Diaminopimelate decarboxylase of Bacteroides thetaiotaomicron (strain ATCC 29148 / DSM 2079 / JCM 5827 / CCUG 10774 / NCTC 10582 / VPI-5482 / E50).